The chain runs to 895 residues: Isoleucine--tRNA ligase (895 aa).

Positions 57 to 67 (PYANGSIHVGH) match the 'HIGH' region motif. Glu549 is an L-isoleucyl-5'-AMP binding site. Positions 590–594 (KMSKS) match the 'KMSKS' region motif. Position 593 (Lys593) interacts with ATP. Cys869, Cys872, Cys888, and Cys891 together coordinate Zn(2+).

This sequence belongs to the class-I aminoacyl-tRNA synthetase family. IleS type 1 subfamily. In terms of assembly, monomer. The cofactor is Zn(2+).

The protein localises to the cytoplasm. It carries out the reaction tRNA(Ile) + L-isoleucine + ATP = L-isoleucyl-tRNA(Ile) + AMP + diphosphate. Functionally, catalyzes the attachment of isoleucine to tRNA(Ile). As IleRS can inadvertently accommodate and process structurally similar amino acids such as valine, to avoid such errors it has two additional distinct tRNA(Ile)-dependent editing activities. One activity is designated as 'pretransfer' editing and involves the hydrolysis of activated Val-AMP. The other activity is designated 'posttransfer' editing and involves deacylation of mischarged Val-tRNA(Ile). This is Isoleucine--tRNA ligase from Mycoplasma genitalium (strain ATCC 33530 / DSM 19775 / NCTC 10195 / G37) (Mycoplasmoides genitalium).